The sequence spans 618 residues: Dihydroxy-acid dehydratase (618 aa).

Position 81 (D81) interacts with Mg(2+). Residue C122 coordinates [2Fe-2S] cluster. Mg(2+)-binding residues include D123 and K124. K124 is subject to N6-carboxylysine. C195 contacts [2Fe-2S] cluster. E493 contributes to the Mg(2+) binding site. S519 functions as the Proton acceptor in the catalytic mechanism.

Belongs to the IlvD/Edd family. In terms of assembly, homodimer. [2Fe-2S] cluster is required as a cofactor. Mg(2+) serves as cofactor.

The enzyme catalyses (2R)-2,3-dihydroxy-3-methylbutanoate = 3-methyl-2-oxobutanoate + H2O. The catalysed reaction is (2R,3R)-2,3-dihydroxy-3-methylpentanoate = (S)-3-methyl-2-oxopentanoate + H2O. The protein operates within amino-acid biosynthesis; L-isoleucine biosynthesis; L-isoleucine from 2-oxobutanoate: step 3/4. It participates in amino-acid biosynthesis; L-valine biosynthesis; L-valine from pyruvate: step 3/4. Functionally, functions in the biosynthesis of branched-chain amino acids. Catalyzes the dehydration of (2R,3R)-2,3-dihydroxy-3-methylpentanoate (2,3-dihydroxy-3-methylvalerate) into 2-oxo-3-methylpentanoate (2-oxo-3-methylvalerate) and of (2R)-2,3-dihydroxy-3-methylbutanoate (2,3-dihydroxyisovalerate) into 2-oxo-3-methylbutanoate (2-oxoisovalerate), the penultimate precursor to L-isoleucine and L-valine, respectively. The sequence is that of Dihydroxy-acid dehydratase from Shewanella amazonensis (strain ATCC BAA-1098 / SB2B).